A 721-amino-acid chain; its full sequence is Catalase-peroxidase (721 aa).

The segment at residues 89–212 (WHSAGTYRTG…LAAVQMGLIY (124 aa)) is a cross-link (tryptophyl-tyrosyl-methioninium (Trp-Tyr) (with M-238)). Residue His-90 is the Proton acceptor of the active site. A cross-link (tryptophyl-tyrosyl-methioninium (Tyr-Met) (with W-89)) is located at residues 212-238 (YVNPEGPNGDPDPFAAAVDIRETFARM). His-253 contributes to the heme b binding site.

It belongs to the peroxidase family. Peroxidase/catalase subfamily. As to quaternary structure, homodimer or homotetramer. Requires heme b as cofactor. In terms of processing, formation of the three residue Trp-Tyr-Met cross-link is important for the catalase, but not the peroxidase activity of the enzyme.

It catalyses the reaction H2O2 + AH2 = A + 2 H2O. It carries out the reaction 2 H2O2 = O2 + 2 H2O. In terms of biological role, bifunctional enzyme with both catalase and broad-spectrum peroxidase activity. The protein is Catalase-peroxidase of Shewanella baltica (strain OS155 / ATCC BAA-1091).